Consider the following 490-residue polypeptide: MGSLPSPNDPSNTFNPMDLTELSTESKLVVDFITQYYQTLETRPVQPRVKPGFLTGQLPDKAPFHGESMEVILSDVNEKIVPGLTHWQSPNFHAYFPASSSNAGLLGELLCSGLSVIGFTWSSSPAATELENVVVDWMAKMLNLPSSFCFSGGGGGVLQANTCEAVLCTLAAARDKALNRVGDDQINKLVLYCSDQTHFTIHKGAKLIGIRSKNIKSITTKKENEFKLCPNDLRDAIRSDLEAGLVPFYVCGTIGTTALGVVDPIKELGKVAREFDLWLHVDGAYGGSACICPEFQHYLDGVDLVDSISMNAHKWLLSNLDCCFLWLQSPNALIESLAAEANFLKGGSEMVDYKDWQISLSRRFRAIKMWMVIRRYGVSNLIEHIRSDVSMAVRFEEMVAADDRFEIVFPRKFALVCFKLSSEKTPPGRDSELTRELMERVNSSGKAYLSGVQMGRIFFIRCVIGSSLTEERHVDNLWRLIQETAQSIVS.

L-phenylalanine is bound by residues proline 97, histidine 198, and histidine 313. Lysine 314 is subject to N6-(pyridoxal phosphate)lysine. Phenylalanine 343 lines the L-phenylalanine pocket.

Belongs to the group II decarboxylase family. In terms of assembly, homodimer. It depends on pyridoxal 5'-phosphate as a cofactor.

It carries out the reaction L-tyrosine + O2 + H2O + H(+) = (4-hydroxyphenyl)acetaldehyde + H2O2 + NH4(+) + CO2. Functionally, catalyzes the production of 4-hydroxyphenylacetaldehyde (HPAA) directly from L-tyrosine, tyramine not being formed as an intermediate. The chain is 4-hydroxyphenylacetaldehyde synthase from Rhodiola rosea (Roseroot).